Consider the following 540-residue polypeptide: Glucose-6-phosphate isomerase (540 aa).

Catalysis depends on Glu-346, which acts as the Proton donor. Catalysis depends on residues His-377 and Lys-505.

Belongs to the GPI family.

The protein localises to the cytoplasm. It carries out the reaction alpha-D-glucose 6-phosphate = beta-D-fructose 6-phosphate. Its pathway is carbohydrate biosynthesis; gluconeogenesis. It functions in the pathway carbohydrate degradation; glycolysis; D-glyceraldehyde 3-phosphate and glycerone phosphate from D-glucose: step 2/4. Catalyzes the reversible isomerization of glucose-6-phosphate to fructose-6-phosphate. This is Glucose-6-phosphate isomerase from Francisella tularensis subsp. tularensis (strain SCHU S4 / Schu 4).